The sequence spans 106 residues: Urease subunit beta (106 aa).

Belongs to the urease beta subunit family. Heterotrimer of UreA (gamma), UreB (beta) and UreC (alpha) subunits. Three heterotrimers associate to form the active enzyme.

The protein localises to the cytoplasm. The catalysed reaction is urea + 2 H2O + H(+) = hydrogencarbonate + 2 NH4(+). Its pathway is nitrogen metabolism; urea degradation; CO(2) and NH(3) from urea (urease route): step 1/1. This Parasynechococcus marenigrum (strain WH8102) protein is Urease subunit beta.